The primary structure comprises 243 residues: Type III pantothenate kinase (243 aa).

Residue 6–13 coordinates ATP; it reads DIGNTNLK. Residue 101–104 coordinates substrate; it reads GSDI. Aspartate 103 serves as the catalytic Proton acceptor. ATP is bound at residue threonine 125. Threonine 176 contributes to the substrate binding site.

It belongs to the type III pantothenate kinase family. Homodimer. The cofactor is NH4(+). Requires K(+) as cofactor.

The protein resides in the cytoplasm. It catalyses the reaction (R)-pantothenate + ATP = (R)-4'-phosphopantothenate + ADP + H(+). It functions in the pathway cofactor biosynthesis; coenzyme A biosynthesis; CoA from (R)-pantothenate: step 1/5. Catalyzes the phosphorylation of pantothenate (Pan), the first step in CoA biosynthesis. This chain is Type III pantothenate kinase, found in Mycoplasma mobile (strain ATCC 43663 / 163K / NCTC 11711) (Mesomycoplasma mobile).